We begin with the raw amino-acid sequence, 445 residues long: uncharacterized protein (445 aa).

A Zn(2+)-binding site is contributed by histidine 66. The Proton acceptor role is filled by glutamate 69. Zn(2+) is bound by residues histidine 70 and glutamate 146. Residues 232–251 (GRQSAPPRKSTGRINGGPAL) form a disordered region.

This sequence belongs to the peptidase M16 family. Zn(2+) is required as a cofactor.

This is an uncharacterized protein from Mycobacterium leprae (strain TN).